The sequence spans 152 residues: Globin-1 subunit beta (152 aa).

Position 2 is an N-acetylserine (S2). A Globin domain is found at 12-152; sequence VSNADQKDLL…SLVAVVQAAL (141 aa). 2 residues coordinate heme b: H72 and H104.

This sequence belongs to the globin family. Heterotetramer of two alpha chains and two beta chains.

This chain is Globin-1 subunit beta, found in Anadara trapezia (Sydney cockle).